The sequence spans 345 residues: Probable aldo-keto reductase 3 (345 aa).

The Proton donor role is filled by tyrosine 63. Histidine 130 lines the substrate pocket. Residue 209 to 219 (SPLGRGFFASG) coordinates NADP(+).

Belongs to the aldo/keto reductase family.

The protein is Probable aldo-keto reductase 3 of Arabidopsis thaliana (Mouse-ear cress).